We begin with the raw amino-acid sequence, 108 residues long: Peptidyl-prolyl cis-trans isomerase FKBP1C (108 aa).

A PPIase FKBP-type domain is found at 20–108 (SQTCVMHYTG…VFDVELLKLE (89 aa)).

Belongs to the FKBP-type PPIase family. FKBP1 subfamily.

The catalysed reaction is [protein]-peptidylproline (omega=180) = [protein]-peptidylproline (omega=0). In terms of biological role, catalyzes the cis-trans isomerization of proline imidic peptide bonds in oligopeptides. This Homo sapiens (Human) protein is Peptidyl-prolyl cis-trans isomerase FKBP1C.